A 391-amino-acid chain; its full sequence is F-box only protein 5 (391 aa).

One can recognise an F-box domain in the interval Ala198–Tyr245. The segment at Cys318–Ser366 adopts a ZBR-type zinc-finger fold. Residues Cys322, Cys325, Cys340, Cys345, Cys350, Cys353, His358, and Cys363 each contribute to the Zn(2+) site. Positions Thr365–Leu391 are disordered. Basic residues predominate over residues Lys382 to Leu391.

As to quaternary structure, part of a SCF (SKP1-cullin-F-box) protein ligase complex. Interacts with btrc. Interacts with skp1. Interacts with cdc20. Interacts with pin1; stabilizes fbxo5 by preventing its association with btrc in an isomerization-dependent pathway; this interaction is present during G2 phase and prevents fbxo5 degradation. Interacts with plk1. Post-translationally, proteolysed; proteolysis is induced by both cyclin B-cdk1 and cyclin A-cdk1/2 complex through probable phosphorylation. Proteolysis is inhibited by pin1 during G2.

It localises to the nucleus. The protein resides in the cytoplasm. Its subcellular location is the cytoskeleton. It is found in the spindle. The protein localises to the microtubule organizing center. It localises to the centrosome. It functions in the pathway protein modification; protein ubiquitination. Its function is as follows. Regulates progression through early mitosis by inhibiting the anaphase promoting complex/cyclosome (APC). Binds to the APC activators cdc20 to prevent APC activation. Can also bind directly to the APC to inhibit substrate-binding. Required to arrest unfertilized eggs at metaphase of meiosis II, by preventing their release from metaphase of meiosis II, through inhibition of APC-dependent cyclin B destruction leading to stabilization of cyclin B-cdk1 complex activity. The protein is F-box only protein 5 of Xenopus tropicalis (Western clawed frog).